Reading from the N-terminus, the 371-residue chain is Bifunctional enzyme IspD/IspF (371 aa).

The tract at residues 1-214 (MNSCFIILAG…NSDIKFNNLI (214 aa)) is 2-C-methyl-D-erythritol 4-phosphate cytidylyltransferase. The segment at 215–371 (KFGIGFDVHR…EVIASVIKND (157 aa)) is 2-C-methyl-D-erythritol 2,4-cyclodiphosphate synthase. Positions 221 and 223 each coordinate a divalent metal cation. 4-CDP-2-C-methyl-D-erythritol 2-phosphate is bound by residues 221–223 (DVH) and 247–248 (HS). H255 serves as a coordination point for a divalent metal cation. Residues 269 to 271 (DIG), 274 to 278 (FSDKN), and K355 each bind 4-CDP-2-C-methyl-D-erythritol 2-phosphate.

In the N-terminal section; belongs to the IspD/TarI cytidylyltransferase family. IspD subfamily. This sequence in the C-terminal section; belongs to the IspF family. Requires a divalent metal cation as cofactor.

It catalyses the reaction 2-C-methyl-D-erythritol 4-phosphate + CTP + H(+) = 4-CDP-2-C-methyl-D-erythritol + diphosphate. It carries out the reaction 4-CDP-2-C-methyl-D-erythritol 2-phosphate = 2-C-methyl-D-erythritol 2,4-cyclic diphosphate + CMP. Its pathway is isoprenoid biosynthesis; isopentenyl diphosphate biosynthesis via DXP pathway; isopentenyl diphosphate from 1-deoxy-D-xylulose 5-phosphate: step 2/6. It functions in the pathway isoprenoid biosynthesis; isopentenyl diphosphate biosynthesis via DXP pathway; isopentenyl diphosphate from 1-deoxy-D-xylulose 5-phosphate: step 4/6. Bifunctional enzyme that catalyzes the formation of 4-diphosphocytidyl-2-C-methyl-D-erythritol from CTP and 2-C-methyl-D-erythritol 4-phosphate (MEP) (IspD), and catalyzes the conversion of 4-diphosphocytidyl-2-C-methyl-D-erythritol 2-phosphate (CDP-ME2P) to 2-C-methyl-D-erythritol 2,4-cyclodiphosphate (ME-CPP) with a corresponding release of cytidine 5-monophosphate (CMP) (IspF). The polypeptide is Bifunctional enzyme IspD/IspF (Pelagibacter ubique (strain HTCC1062)).